The following is a 357-amino-acid chain: LINE-1 retrotransposable element ORF1 protein (357 aa).

The interval 1 to 40 (MAKGKRKNPTNRNQDHSPSSERSTPTPPSPGHPNTTENLD) is disordered. Residues 59 to 156 (HKSLKDLQES…IENIDTTVKE (98 aa)) adopt a coiled-coil conformation. The tract at residues 179–274 (NLRIIGIDEN…KGRPIRITPD (96 aa)) is RNA recognition motif (RRM) domain. Residues 278–339 (ETMKARRAWT…STNPALQRII (62 aa)) form a C-terminal domain (CTD) region.

It belongs to the transposase 22 family. As to quaternary structure, homotrimer (via coiled coil domain). May also form larger homooligomers. Interacts with Tex19.1 and UBR2. Interacts with MOV10. Polyubiquitinated, probably by UBR2, which induces its degradation. As to expression, expressed in meiotic spermatocytes and in the cerebellum (at protein level).

It localises to the nucleus. It is found in the nucleolus. The protein resides in the cytoplasm. Its subcellular location is the cytoplasmic ribonucleoprotein granule. The protein localises to the stress granule. In terms of biological role, nucleic acid-binding protein which is essential for retrotransposition of LINE-1 elements in the genome. Functions as a nucleic acid chaperone binding its own transcript and therefore preferentially mobilizing the transcript from which they are encoded. The protein is LINE-1 retrotransposable element ORF1 protein of Mus musculus (Mouse).